Reading from the N-terminus, the 249-residue chain is Small ribosomal subunit protein uS3 (249 aa).

The KH type-2 domain maps to 39–107; it reads VRAMLKKRLY…EVHLNIVEIR (69 aa). The segment at 215–249 is disordered; the sequence is LDKRLATESGPAGEGGGRERGDRPDRGDRGRRDRG. Positions 230–249 are enriched in basic and acidic residues; sequence GGRERGDRPDRGDRGRRDRG.

This sequence belongs to the universal ribosomal protein uS3 family. In terms of assembly, part of the 30S ribosomal subunit. Forms a tight complex with proteins S10 and S14.

Functionally, binds the lower part of the 30S subunit head. Binds mRNA in the 70S ribosome, positioning it for translation. This is Small ribosomal subunit protein uS3 from Caulobacter sp. (strain K31).